The primary structure comprises 504 residues: ATP synthase subunit alpha, chloroplastic (504 aa).

170–177 (GDRQTGKT) is an ATP binding site.

The protein belongs to the ATPase alpha/beta chains family. F-type ATPases have 2 components, CF(1) - the catalytic core - and CF(0) - the membrane proton channel. CF(1) has five subunits: alpha(3), beta(3), gamma(1), delta(1), epsilon(1). CF(0) has four main subunits: a, b, b' and c.

It localises to the plastid. It is found in the chloroplast thylakoid membrane. The enzyme catalyses ATP + H2O + 4 H(+)(in) = ADP + phosphate + 5 H(+)(out). Produces ATP from ADP in the presence of a proton gradient across the membrane. The alpha chain is a regulatory subunit. The chain is ATP synthase subunit alpha, chloroplastic from Ostreococcus tauri.